We begin with the raw amino-acid sequence, 103 residues long: Small ribosomal subunit protein uS10 (103 aa).

It belongs to the universal ribosomal protein uS10 family. Part of the 30S ribosomal subunit.

Functionally, involved in the binding of tRNA to the ribosomes. This is Small ribosomal subunit protein uS10 from Aliivibrio fischeri (strain ATCC 700601 / ES114) (Vibrio fischeri).